The sequence spans 932 residues: Protein translocase subunit SecA (932 aa).

ATP is bound by residues Gln87, 105 to 109 (GEGKT), and Asp515. Zn(2+) is bound by residues Cys916, Cys918, Cys927, and His928.

The protein belongs to the SecA family. As to quaternary structure, monomer and homodimer. Part of the essential Sec protein translocation apparatus which comprises SecA, SecYEG and auxiliary proteins SecDF-YajC and YidC. Requires Zn(2+) as cofactor.

It is found in the cell inner membrane. It localises to the cytoplasm. It catalyses the reaction ATP + H2O + cellular proteinSide 1 = ADP + phosphate + cellular proteinSide 2.. Functionally, part of the Sec protein translocase complex. Interacts with the SecYEG preprotein conducting channel. Has a central role in coupling the hydrolysis of ATP to the transfer of proteins into and across the cell membrane, serving both as a receptor for the preprotein-SecB complex and as an ATP-driven molecular motor driving the stepwise translocation of polypeptide chains across the membrane. This Burkholderia orbicola (strain AU 1054) protein is Protein translocase subunit SecA.